A 302-amino-acid chain; its full sequence is G-protein coupled receptor A5 (302 aa).

At 1-20 the chain is on the extracellular side; the sequence is MADSSNSSLNCTAIHDQTVL. A helical membrane pass occupies residues 21–41; sequence ILGQVFNSVWLFISVIFLYIF. At 42–50 the chain is on the cytoplasmic side; it reads ACKLCFRPR. Residues 51–71 traverse the membrane as a helical segment; sequence IYLWLSFYTLGFMLWVLCKVL. The Extracellular segment spans residues 72–81; the sequence is QEYVTGKFKC. Residues 82–102 traverse the membrane as a helical segment; that stretch reads VITNCIGDFCLVFLSCIMLGI. The Cytoplasmic portion of the chain corresponds to 103–122; sequence MLDRYLKIQGTLRGGMKDIH. The helical transmembrane segment at 123 to 143 threads the bilayer; sequence IGIFVSASCFGSLMIALLDGL. The Extracellular segment spans residues 144-173; it reads HMGDSEKLQFNGTESFKCLPATSVSSYKAQ. Residues 174–194 form a helical membrane-spanning segment; that stretch reads LMFKSIFCIICIIMCLILTCL. Residues 195-208 are Cytoplasmic-facing; it reads TAKKVLGTRLRKKY. Residues 209–229 traverse the membrane as a helical segment; that stretch reads VIVGNVGLLSFVNILLWVMIA. At 230-249 the chain is on the extracellular side; the sequence is CGLLKQALESNLSLCPTKQS. The helical transmembrane segment at 250 to 270 threads the bilayer; sequence TYIYPYTMPVTVIFVLVIYLF. Topologically, residues 271-302 are cytoplasmic; sequence SSTHMKNAMRKSGQIRHSLSSPNQVQSSFRLV.

This sequence belongs to the G-protein coupled receptor 1 family.

It localises to the host cell membrane. The protein localises to the host endoplasmic reticulum membrane. Its function is as follows. Acts as a viral G-protein coupled receptor that constitutively activates host alphai-type G-proteins, thereby inhibiting host forskolin-triggered CREB activation. This chain is G-protein coupled receptor A5 (A5), found in Connochaetes taurinus (Blue wildebeest).